The primary structure comprises 152 residues: Ribosome maturation factor RimP (152 aa).

The protein belongs to the RimP family.

Its subcellular location is the cytoplasm. Its function is as follows. Required for maturation of 30S ribosomal subunits. The protein is Ribosome maturation factor RimP of Photorhabdus laumondii subsp. laumondii (strain DSM 15139 / CIP 105565 / TT01) (Photorhabdus luminescens subsp. laumondii).